Reading from the N-terminus, the 553-residue chain is Serine/threonine-protein phosphatase 2B catalytic subunit A1 (553 aa).

S2 carries the N-acetylserine modification. The Fe cation site is built by D119, H121, and D147. D147 and N179 together coordinate Zn(2+). The active-site Proton donor is H180. Zn(2+)-binding residues include H228 and H317. The interval 413-447 is disordered; sequence LDPESEPKAAEETVKARANATKETGTPSDEKASSA. A compositionally biased stretch (basic and acidic residues) spans 417–427; the sequence is SEPKAAEETVK.

The protein belongs to the PPP phosphatase family. PP-2B subfamily. Composed of two components (A and B), the A component is the catalytic subunit and the B component confers calcium sensitivity. Fe(3+) serves as cofactor. Zn(2+) is required as a cofactor.

The catalysed reaction is O-phospho-L-seryl-[protein] + H2O = L-seryl-[protein] + phosphate. It catalyses the reaction O-phospho-L-threonyl-[protein] + H2O = L-threonyl-[protein] + phosphate. Calcium-dependent, calmodulin-stimulated protein phosphatase. This subunit may have a role in the calmodulin activation of calcineurin. The protein is Serine/threonine-protein phosphatase 2B catalytic subunit A1 (CNA1) of Saccharomyces cerevisiae (strain ATCC 204508 / S288c) (Baker's yeast).